Reading from the N-terminus, the 42-residue chain is Photosystem I reaction center subunit IX (42 aa).

Residues Tyr7–Ile27 form a helical membrane-spanning segment.

The protein belongs to the PsaJ family.

The protein resides in the plastid. It localises to the chloroplast thylakoid membrane. Functionally, may help in the organization of the PsaE and PsaF subunits. This chain is Photosystem I reaction center subunit IX, found in Chaetosphaeridium globosum (Charophycean green alga).